The primary structure comprises 141 residues: Ribosome-binding factor A (141 aa).

The segment at 120 to 141 is disordered; that stretch reads SPHVQRDLQENDDQEDDSEGSL. A compositionally biased stretch (acidic residues) spans 129 to 141; sequence ENDDQEDDSEGSL.

It belongs to the RbfA family. In terms of assembly, monomer. Binds 30S ribosomal subunits, but not 50S ribosomal subunits or 70S ribosomes.

It is found in the cytoplasm. Its function is as follows. One of several proteins that assist in the late maturation steps of the functional core of the 30S ribosomal subunit. Associates with free 30S ribosomal subunits (but not with 30S subunits that are part of 70S ribosomes or polysomes). Required for efficient processing of 16S rRNA. May interact with the 5'-terminal helix region of 16S rRNA. This is Ribosome-binding factor A from Zymomonas mobilis subsp. mobilis (strain ATCC 31821 / ZM4 / CP4).